A 153-amino-acid chain; its full sequence is Probable ubiquitin-conjugating enzyme E2 C (153 aa).

The UBC core domain occupies 6 to 153; it reads SVSKRLQSEL…KRYQEATSRP (148 aa). The Glycyl thioester intermediate role is filled by Cys90.

Belongs to the ubiquitin-conjugating enzyme family. As to quaternary structure, component of the APC/C complex. Post-translationally, autoubiquitinated by the APC/C complex, leading to its degradation by the proteasome.

The catalysed reaction is S-ubiquitinyl-[E1 ubiquitin-activating enzyme]-L-cysteine + [E2 ubiquitin-conjugating enzyme]-L-cysteine = [E1 ubiquitin-activating enzyme]-L-cysteine + S-ubiquitinyl-[E2 ubiquitin-conjugating enzyme]-L-cysteine.. The protein operates within protein modification; protein ubiquitination. Its function is as follows. Catalyzes the covalent attachment of ubiquitin to other proteins. Acts as an essential factor of the anaphase promoting complex/cyclosome (APC/C), a cell cycle-regulated ubiquitin ligase that controls progression through mitosis. Acts by initiating polyubiquitin chains on APC/C substrates, leading to the degradation of APC/C substrates by the proteasome and promoting mitotic exit. The sequence is that of Probable ubiquitin-conjugating enzyme E2 C (ube2c) from Dictyostelium discoideum (Social amoeba).